A 382-amino-acid polypeptide reads, in one-letter code: Na(+)/H(+) antiporter NhaA 2 (382 aa).

11 helical membrane-spanning segments follow: residues 7–27, 58–78, 94–114, 124–144, 153–173, 178–198, 199–219, 255–275, 291–311, 327–347, and 361–381; these read MVLS…LALL, LDLW…GLEL, SLPI…FIAI, GWAI…MLLG, LFLL…IALF, LSAL…LLNY, YHIT…IAML, NPWV…GIDI, IILG…FIAI, FYGI…IDGL, and LAIL…LKIV.

It belongs to the NhaA Na(+)/H(+) (TC 2.A.33) antiporter family.

It localises to the cell inner membrane. The catalysed reaction is Na(+)(in) + 2 H(+)(out) = Na(+)(out) + 2 H(+)(in). Na(+)/H(+) antiporter that extrudes sodium in exchange for external protons. The sequence is that of Na(+)/H(+) antiporter NhaA 2 from Campylobacter jejuni (strain RM1221).